Here is a 146-residue protein sequence, read N- to C-terminus: Phospho-2-dehydro-3-deoxyheptonate aldolase (146 aa).

Belongs to the class-II DAHP synthase family. In terms of assembly, homodimer.

It carries out the reaction D-erythrose 4-phosphate + phosphoenolpyruvate + H2O = 7-phospho-2-dehydro-3-deoxy-D-arabino-heptonate + phosphate. Its pathway is metabolic intermediate biosynthesis; chorismate biosynthesis; chorismate from D-erythrose 4-phosphate and phosphoenolpyruvate: step 1/7. The chain is Phospho-2-dehydro-3-deoxyheptonate aldolase from Streptomyces lividans.